The primary structure comprises 273 residues: Putative inactive beta-glucuronidase protein GUSBP11 (273 aa).

Positions 1 to 20 (MTAAETGRGKPRLGGGSGLG) are disordered.

The protein belongs to the glycosyl hydrolase 2 family.

The protein is Putative inactive beta-glucuronidase protein GUSBP11 (GUSBP11) of Homo sapiens (Human).